Consider the following 671-residue polypeptide: Replication protein A 70 kDa DNA-binding subunit (671 aa).

Disordered stretches follow at residues 143–166 and 190–219; these read QVSQ…PAVN and MNKT…LQIS. Residues 199 to 213 show a composition bias toward low complexity; the sequence is NNNNNNNNNGNNKNN. A DNA-binding region (OB) is located at residues 240 to 322; it reads QTIKVRITKK…NKGDHTVTVN (83 aa). The C4-type zinc-finger motif lies at 530–549; the sequence is CFSCKKKIARNNEVWTCINC.

It belongs to the replication factor A protein 1 family. As to quaternary structure, component of the replication protein A complex (RPA), a heterotrimeric complex composed of RPA1, RPA2/TEB2 and RPA3/TEB3.

Its function is as follows. As part of the heterotrimeric replication protein A (RPA) complex, binds and stabilizes single-stranded DNA intermediates, that form during DNA replication or upon DNA stress. It prevents their reannealing and in parallel, recruits and activates different proteins and complexes involved in DNA metabolism. Thereby, it plays an essential role both in DNA replication and the cellular response to DNA damage. In the cellular response to DNA damage, the RPA complex controls DNA repair and DNA damage checkpoint activation. This chain is Replication protein A 70 kDa DNA-binding subunit, found in Tetrahymena thermophila (strain SB210).